The sequence spans 490 residues: Protein twist (490 aa).

Disordered regions lie at residues 48-74 (QLQHQQQHLHSHQHHQQHQQQQQQHTQ), 98-167 (PSNE…TGGS), and 330-359 (LDGSDAGGKAFRKPRRRLKRKPSKTEETDE). A compositionally biased stretch (basic residues) spans 54 to 64 (QHLHSHQHHQQ). Composition is skewed to low complexity over residues 65-74 (HQQQQQQHTQ) and 104-135 (STSSNQSAQSTSLEMNNNNTSSNNTSSGNNPS). Basic residues predominate over residues 339–351 (AFRKPRRRLKRKP). The 52-residue stretch at 362-413 (NQRVMANVRERQRTQSLNDAFKSLQQIIPTLPSDKLSKIQTLKLATRYIDFL) folds into the bHLH domain.

In terms of assembly, efficient DNA binding requires dimerization with another bHLH protein. Homodimer.

The protein localises to the nucleus. Its function is as follows. Involved in the establishment and dorsoventral patterning of germ layers in the embryo. The protein is Protein twist of Drosophila erecta (Fruit fly).